A 149-amino-acid polypeptide reads, in one-letter code: ER export of PMA1 protein 1 (149 aa).

Over 1-6 the chain is Lumenal; that stretch reads MNLYGY. A helical; Signal-anchor for type II membrane protein transmembrane segment spans residues 7-27; sequence FLLLIIVIAFIALLPLFSGIG. The Cytoplasmic portion of the chain corresponds to 28 to 149; that stretch reads TFKLTKPKSS…KKNEAYEGFV (122 aa).

In terms of assembly, interacts with PMA1 and PSG1.

Its subcellular location is the endoplasmic reticulum membrane. It is found in the cytoplasmic vesicle. The protein localises to the COPI-coated vesicle membrane. The protein resides in the COPII-coated vesicle membrane. It localises to the golgi apparatus membrane. In terms of biological role, specific cargo receptor protein for the plasma membrane ATPase PMA1 that acts with PSG1 to promote the transport and maturation of PMA1. EXP1 and PSG1 probably act sequentially to promote PMA1 sorting between the ER and the Golgi, with EXP1 promoting PMA1 export from the ER to the Golgi while PSG1 has a role in PMA1 maturation or quality control in the Golgi. The chain is ER export of PMA1 protein 1 from Saccharomyces cerevisiae (strain ATCC 204508 / S288c) (Baker's yeast).